The chain runs to 243 residues: Secreted RxLR effector protein 28 (243 aa).

The first 26 residues, Met-1–Ala-26, serve as a signal peptide directing secretion. A RxLR motif is present at residues Arg-49–Arg-52. Residues Asn-187 to Glu-243 are disordered. Over residues Ser-199–Gly-216 the composition is skewed to low complexity.

It belongs to the RxLR effector family.

Its subcellular location is the secreted. The protein localises to the host cytoplasm. It localises to the host nucleus. Its function is as follows. Effector that significantly enhances susceptibilities of grapevine and tobacco to pathogens. Acts as a broad suppressor of cell death to interrupt plant immunity. Completely inhibits cell death induced by cell death-inducing proteins, including the PAMP elicitor INF1 from P.infestans. Reduces the transcriptional levels of the defense-related genes and impairs the H(2)O(2) accumulation in N.benthamiana. The sequence is that of Secreted RxLR effector protein 28 from Plasmopara viticola (Downy mildew of grapevine).